The primary structure comprises 394 residues: GDNF family receptor alpha-like (394 aa).

The signal sequence occupies residues methionine 1–serine 19. Residues glutamine 20–glycine 350 lie on the Extracellular side of the membrane. Asparagine 65, asparagine 101, and asparagine 115 each carry an N-linked (GlcNAc...) asparagine glycan. Intrachain disulfides connect cysteine 132-cysteine 190, cysteine 139-cysteine 145, cysteine 156-cysteine 168, cysteine 163-cysteine 211, cysteine 192-cysteine 199, cysteine 221-cysteine 292, cysteine 228-cysteine 234, cysteine 245-cysteine 276, cysteine 253-cysteine 259, cysteine 270-cysteine 317, and cysteine 294-cysteine 305. The tract at residues alanine 150–arginine 229 is required for interaction with GDF15. Residues glutamate 351 to leucine 371 traverse the membrane as a helical segment. Over lysine 372–glutamine 394 the chain is Cytoplasmic.

Belongs to the GDNFR family. In terms of assembly, interacts (via the extracellular domain) with GDF15 and RET; receptor of GDF15, mediates cellular signaling through interaction with RET after GDF15-binding. Interaction with RET requires previous GDF15-binding. Post-translationally, cleaved and inactivated by MMP14, inhibiting the GDF15-GFRAL aversive response. In terms of tissue distribution, expressed in the brainstem, restricted to cells in the area postrema and the immediately adjacent region of the nucleus tractus solitarius. Detected at low levels in testis.

The protein resides in the cell membrane. In terms of biological role, brainstem-restricted receptor for GDF15 hormone, which triggers an aversive response, characterized by nausea, vomiting, and/or loss of appetite in response to various stresses. The aversive response is both required to reduce continuing exposure to those stresses at the time of exposure and to promote avoidance behavior in the future. The GDF15-GFRAL aversive response is triggered by stresses, such as anticancer drugs (camptothecin or cisplatin), cancers or drugs such as metformin. Upon interaction with its ligand, GDF15, mediates the GDF15-induced autophosphorylation and activation of the RET tyrosine kinase receptor, leading to activation of MAPK- and AKT- signaling pathways. Ligand-binding activates GFRAL-expressing neurons localized in the area postrema and nucleus tractus solitarius of the brainstem. The GDF15-GFRAL signal induces expression of genes involved in metabolism, such as lipid metabolism in adipose tissues. This is GDNF family receptor alpha-like from Rattus norvegicus (Rat).